The following is a 281-amino-acid chain: MSAQESCLSLIKYFLFVFNLFFFVLGGLIFCFGTWILIDKTSFVSFVGLSFVPLQTWSKVLAVSGVLTMALALLGCVGALKELRCLLGLYFGMLLLLFATQITLGILISTQRVRLERRVQELVLRTIQSYRTNPDETAAEESWDYAQFQLRCCGWQSPRDWNKAQMLKANESEEPFVPCSCYNSTATNDSTVFDKLFFSQLSRLGPRAKLRQTADICALPAKAHIYREGCAQSLQKWLHNNIISIVGICLGVGLLELGFMTLSIFLCRNLDHVYDRLARYR.

Over 1–17 (MSAQESCLSLIKYFLFV) the chain is Cytoplasmic. The chain crosses the membrane as a helical span at residues 18–38 (FNLFFFVLGGLIFCFGTWILI). Topologically, residues 39–59 (DKTSFVSFVGLSFVPLQTWSK) are extracellular. Residues 60–74 (VLAVSGVLTMALALL) traverse the membrane as a helical segment. Residues 75–85 (GCVGALKELRC) lie on the Cytoplasmic side of the membrane. The chain crosses the membrane as a helical span at residues 86–111 (LLGLYFGMLLLLFATQITLGILISTQ). The Extracellular portion of the chain corresponds to 112–241 (RVRLERRVQE…QSLQKWLHNN (130 aa)). 3 N-linked (GlcNAc...) asparagine glycosylation sites follow: asparagine 170, asparagine 183, and asparagine 188. The chain crosses the membrane as a helical span at residues 242–266 (IISIVGICLGVGLLELGFMTLSIFL). Topologically, residues 267–281 (CRNLDHVYDRLARYR) are cytoplasmic.

It belongs to the tetraspanin (TM4SF) family. In terms of assembly, interacts with SCIMP. Interacts with SOCS3. Interacts with DECTIN1/CLEC7A. Post-translationally, tyrosine phosphorylated; leading to activation of downstream signaling pathways.

The protein resides in the cell membrane. In terms of biological role, structural component of specialized membrane microdomains known as tetraspanin-enriched microdomains (TERMs), which act as platforms for receptor clustering and signaling. Participates thereby in diverse biological functions such as cell signal transduction, adhesion, migration and protein trafficking. Upon ligand binding, two signaling pathways are activated, one acting through phosphorylation by LYN leading to cell death or a survival pathway with activation of GSK3B. Plays an essential role for clustering of integrin ITGA4/ITGB1 and promotes its mobility in the plasma membrane of B-cells. In turn, participates in ITGA4/ITGB1 integrin-mediated antiapoptotic signaling through AKT. Also plays a role in the migration of dendritic cells and neutrophils to draining lymph nodes, as well as in their integrin-mediated adhesion. Negatively regulates IL-6 responses through direct interaction with SOCS3 thereby preventing constitutive IL-6 signaling. Alternatively, inhibition of IL-6 signaling can also occur via interaction and stabilization of DECTIN1/CLEC7A at the cell membrane to inhibit its ability to promote the production of IL-6. This chain is Leukocyte antigen CD37 (Cd37), found in Mus musculus (Mouse).